The primary structure comprises 846 residues: MAPLAVDPAALDSAGGAVVAAGAGLGAVISSLTAALAGCAGMAGDDPAGAVFGRSYDGSAAALVQAMSVARNGLCNLGDGVRMSAHNYSLAEAMSDVAGRAAPLPAPPPSGCVGVGAPPSAVGGGGGAPKGWGWVAPYIGMIWPNGDSTKLRAAAVAWRSAGTQFALTEIQSTAGPMGVIRAQQLPEAGLIESAFADAYASTTAVVGQCHQLAAQLDAYAARIDAVHAAVLDLLARICDPLTGIKEVWEFLTDQDEDEIQRIAHDIAVVVDQFSGEVDALAAEITAVVSHAEAVITAMADHAGKQWDRFLHSNPVGVVIDGTGQQLKGFGEEAFGMAKDSWDLGPLRASIDPFGWYRSWEEMLTGMAPLAGLGGENAPGVVESWKQFGKSLIHWDEWTTNPNEALGKTVFDAATLALPGGPLSKLGSKGRDILAGVRGLKERLEPTTPHLEPPATPPRPGPQPPRIEPPESGHPAPAPAAKPAPVPANGPLPHSPTESKPPPVDRPAEPVAPSSASAGQPRVSAATTPGTHVPHGLPQPGEHVPAQAPPATTLLGGPPVESAPATAHQPQWATTPAAPAAAPHSTPGGVHSTESGPHGRSLSAHGSEPTHDGASHGSGHGSGSEPPGLHAPHREQQLAMHSNEPAGEGWHRLSDEAVDPQYGEPLSRHWDFTDNPADRSRINPVVAQLMEDPNAPFGRDPQGQPYTQERYQERFNSVGPWGQQYSNFPPNNGAVPGTRIAYTNLEKFLSDYGPQLDRIGGDQGKYLAIMEHGRPASWEQRALHVTSLRDPYHAYTIDWLPEGWFIEVSEVAPGCGQPGGSIQVRIFDHQNEMRKVEELIRRGVLRQ.

The tract at residues 1–443 is NTD; sequence MAPLAVDPAA…AGVRGLKERL (443 aa). The segment at 442 to 630 is disordered; it reads RLEPTTPHLE…SGSEPPGLHA (189 aa). Pro residues-rich tracts occupy residues 450-466 and 475-504; these read LEPP…PPRI and APAP…PPVD. Low complexity-rich tracts occupy residues 508 to 517 and 562 to 586; these read EPVAPSSASA and APAT…HSTP. Residues 651 to 846 form a TNT region; sequence RLSDEAVDPQ…ELIRRGVLRQ (196 aa). The TNT domain occupies 751 to 846; sequence YGPQLDRIGG…ELIRRGVLRQ (96 aa). Residue Arg-757 is part of the active site. Arg-780 provides a ligand contact to NAD(+). Gln-822 is an active-site residue.

As to quaternary structure, interacts with the immunity factor for TNT (IFT) homolog. In terms of processing, the C-terminal domain (TNT) is probably cleaved.

Its subcellular location is the cell outer membrane. It localises to the secreted. The protein localises to the cell surface. The catalysed reaction is NAD(+) + H2O = ADP-D-ribose + nicotinamide + H(+). Its activity is regulated as follows. Glycohydrolase activity is completely inhibited by interaction with the immunity factor for TNT (IFT) homolog. This inhibition protects M.bovis from self-poisoning. In terms of biological role, the N-terminal domain (NTD) forms an outer membrane channel and is used for uptake of nutrients across the outer membrane. Also confers susceptibility to structurally different antibiotics and antituberculosis drugs, and to toxic immune factors such as nitric oxide (NO). The C-terminal domain (TNT) is dispensable for normal growth in macrophages. This is Outer membrane channel protein CpnT from Mycobacterium bovis (strain BCG / Pasteur 1173P2).